Consider the following 767-residue polypeptide: Photosystem I P700 chlorophyll a apoprotein A1 (767 aa).

Transmembrane regions (helical) follow at residues 72-95 (IFSA…FHGA), 158-181 (LMAL…FHYH), 197-221 (LNHH…HVSA), 305-323 (IAHH…GHMY), 364-387 (WHAQ…QHMY), 403-429 (IGLF…IAMV), 451-473 (AIIS…LYIH), and 548-566 (FMVH…LILL). [4Fe-4S] cluster is bound by residues Cys590 and Cys599. Transmembrane regions (helical) follow at residues 606-627 (HVFL…HFSW) and 681-703 (TAAY…MFLF). His692 provides a ligand contact to chlorophyll a'. Chlorophyll a-binding residues include Met700 and Tyr708. Trp709 contacts phylloquinone. A helical membrane pass occupies residues 741–761 (AVGVAHYLLGGIATTWAFFHA).

Belongs to the PsaA/PsaB family. As to quaternary structure, the PsaA/B heterodimer binds the P700 chlorophyll special pair and subsequent electron acceptors. PSI consists of a core antenna complex that captures photons, and an electron transfer chain that converts photonic excitation into a charge separation. The cyanobacterial PSI reaction center is composed of one copy each of PsaA,B,C,D,E,F,I,J,K,L,M and X, and forms trimeric complexes. It depends on PSI electron transfer chain: 5 chlorophyll a, 1 chlorophyll a', 2 phylloquinones and 3 4Fe-4S clusters. PSI core antenna: 90 chlorophyll a, 22 carotenoids, 3 phospholipids and 1 galactolipid. P700 is a chlorophyll a/chlorophyll a' dimer, A0 is one or more chlorophyll a, A1 is one or both phylloquinones and FX is a shared 4Fe-4S iron-sulfur center. as a cofactor.

The protein resides in the cellular thylakoid membrane. It carries out the reaction reduced [plastocyanin] + hnu + oxidized [2Fe-2S]-[ferredoxin] = oxidized [plastocyanin] + reduced [2Fe-2S]-[ferredoxin]. Functionally, psaA and PsaB bind P700, the primary electron donor of photosystem I (PSI), as well as the electron acceptors A0, A1 and FX. PSI is a plastocyanin/cytochrome c6-ferredoxin oxidoreductase, converting photonic excitation into a charge separation, which transfers an electron from the donor P700 chlorophyll pair to the spectroscopically characterized acceptors A0, A1, FX, FA and FB in turn. Oxidized P700 is reduced on the lumenal side of the thylakoid membrane by plastocyanin or cytochrome c6. This chain is Photosystem I P700 chlorophyll a apoprotein A1, found in Synechococcus sp. (strain CC9605).